The following is a 1394-amino-acid chain: ABC transporter patM (1394 aa).

The segment at 1–41 (MVDNYHSSLDVAKTPIQSDADAQKSEAETEGPSSKSSQIAA) is disordered. The ABC transporter 1 domain maps to 98 to 341 (SPLQNRQRKQ…FEDLGFECLS (244 aa)). The next 6 membrane-spanning stretches (helical) occupy residues 437-457 (SLWA…GTLF), 467-487 (LFIF…QSMA), 511-531 (IAYA…AICY), 546-566 (GNFF…SMFF), 579-599 (AVLP…LYVP), and 688-708 (VGIN…GMEM). The disordered stretch occupies residues 727-755 (VTHRRDKIDSETGQDQGNESSEMSAGQSN). The segment covering 737 to 755 (ETGQDQGNESSEMSAGQSN) has biased composition (polar residues). The ABC transporter 2 domain occupies 767-1013 (DKSHNLAWTN…EAIQYFQPRS (247 aa)). Residue 808–815 (GVSGAGKT) coordinates ATP. 6 consecutive transmembrane segments (helical) span residues 1131–1151 (GAYN…PLGL), 1177–1197 (LAFV…SSLV), 1219–1239 (FLMY…CASL), 1245–1265 (AAFA…GTLS), 1280–1300 (ISPL…DLPI), and 1368–1388 (IGVF…MTYL).

It belongs to the ABC transporter superfamily. ABCG family. PDR (TC 3.A.1.205) subfamily.

It is found in the vacuole membrane. The protein resides in the cell membrane. Its pathway is mycotoxin biosynthesis; patulin biosynthesis. Functionally, ABC transporter; part of the gene cluster that mediates the biosynthesis of patulin, an acetate-derived tetraketide mycotoxin produced by several fungal species that shows antimicrobial properties against several bacteria. May be involved in the secretion of E-ascladiol to be converted to patulin by the secreted patulin synthase patE. This Penicillium expansum (Blue mold rot fungus) protein is ABC transporter patM.